Consider the following 192-residue polypeptide: Secreted phosphoprotein 24 (192 aa).

A signal peptide spans 1 to 18 (MKWCVLMLALLQSLCCSG). Disulfide bonds link Cys-82–Cys-93 and Cys-106–Cys-124. A disordered region spans residues 124 to 192 (CGQDSSSSES…RGDSIGNHLE (69 aa)). The segment covering 128–137 (SSSSESSSEE) has biased composition (low complexity).

This sequence belongs to the SPP2 family. Multiply phosphorylated at serine residues.

It localises to the secreted. Could coordinate an aspect of bone turnover. In Oncorhynchus mykiss (Rainbow trout), this protein is Secreted phosphoprotein 24 (spp2).